The chain runs to 84 residues: Large ribosomal subunit protein bL27 (84 aa).

The segment at 1–20 is disordered; sequence MAHKKSGGASRNGRDSNPKY.

Belongs to the bacterial ribosomal protein bL27 family.

This is Large ribosomal subunit protein bL27 from Dictyoglomus thermophilum (strain ATCC 35947 / DSM 3960 / H-6-12).